A 239-amino-acid polypeptide reads, in one-letter code: Ribonuclease 3 (239 aa).

The RNase III domain maps to 18–141 (YLTLEKALGY…LMAGVYLEAG (124 aa)). E54 contributes to the Mg(2+) binding site. D58 is a catalytic residue. Mg(2+) is bound by residues S127 and E130. E130 is a catalytic residue. The 70-residue stretch at 168-237 (DYKTALQELT…AYQALQKLKE (70 aa)) folds into the DRBM domain.

Belongs to the ribonuclease III family. In terms of assembly, homodimer. It depends on Mg(2+) as a cofactor.

The protein resides in the cytoplasm. It catalyses the reaction Endonucleolytic cleavage to 5'-phosphomonoester.. In terms of biological role, digests double-stranded RNA. Involved in the processing of primary rRNA transcript to yield the immediate precursors to the large and small rRNAs (23S and 16S). Processes some mRNAs, and tRNAs when they are encoded in the rRNA operon. Processes pre-crRNA and tracrRNA of type II CRISPR loci if present in the organism. This Helicobacter pylori (strain J99 / ATCC 700824) (Campylobacter pylori J99) protein is Ribonuclease 3.